We begin with the raw amino-acid sequence, 327 residues long: uncharacterized protein (327 aa).

Positions lysine 12–glutamate 79 constitute an S4 RNA-binding domain. Residue aspartate 136 is part of the active site.

Belongs to the pseudouridine synthase RluA family.

The catalysed reaction is a uridine in RNA = a pseudouridine in RNA. This is an uncharacterized protein from Helicobacter pylori (strain ATCC 700392 / 26695) (Campylobacter pylori).